Consider the following 486-residue polypeptide: Malonate-semialdehyde dehydrogenase 1 (486 aa).

5 residues coordinate NAD(+): Phe154, Lys178, Glu181, Arg182, and Ser231. The Nucleophile role is filled by Cys286. Position 386 (Glu386) interacts with NAD(+).

It belongs to the aldehyde dehydrogenase family. IolA subfamily. As to quaternary structure, homotetramer.

The catalysed reaction is 3-oxopropanoate + NAD(+) + CoA + H2O = hydrogencarbonate + acetyl-CoA + NADH + H(+). It carries out the reaction 2-methyl-3-oxopropanoate + NAD(+) + CoA + H2O = propanoyl-CoA + hydrogencarbonate + NADH + H(+). The protein operates within polyol metabolism; myo-inositol degradation into acetyl-CoA; acetyl-CoA from myo-inositol: step 7/7. Catalyzes the oxidation of malonate semialdehyde (MSA) and methylmalonate semialdehyde (MMSA) into acetyl-CoA and propanoyl-CoA, respectively. Is involved in a myo-inositol catabolic pathway. Bicarbonate, and not CO2, is the end-product of the enzymatic reaction. The polypeptide is Malonate-semialdehyde dehydrogenase 1 (Bacillus thuringiensis (strain Al Hakam)).